A 433-amino-acid polypeptide reads, in one-letter code: Methylenetetrahydrofolate--tRNA-(uracil-5-)-methyltransferase TrmFO (433 aa).

7–12 (GGGLAG) provides a ligand contact to FAD.

It belongs to the MnmG family. TrmFO subfamily. FAD serves as cofactor.

The protein localises to the cytoplasm. The enzyme catalyses uridine(54) in tRNA + (6R)-5,10-methylene-5,6,7,8-tetrahydrofolate + NADH + H(+) = 5-methyluridine(54) in tRNA + (6S)-5,6,7,8-tetrahydrofolate + NAD(+). The catalysed reaction is uridine(54) in tRNA + (6R)-5,10-methylene-5,6,7,8-tetrahydrofolate + NADPH + H(+) = 5-methyluridine(54) in tRNA + (6S)-5,6,7,8-tetrahydrofolate + NADP(+). In terms of biological role, catalyzes the folate-dependent formation of 5-methyl-uridine at position 54 (M-5-U54) in all tRNAs. This chain is Methylenetetrahydrofolate--tRNA-(uracil-5-)-methyltransferase TrmFO, found in Natranaerobius thermophilus (strain ATCC BAA-1301 / DSM 18059 / JW/NM-WN-LF).